The chain runs to 429 residues: Adenylosuccinate synthetase (429 aa).

GTP contacts are provided by residues G12–K18 and G40–T42. The Proton acceptor role is filled by D13. Residues D13 and G40 each coordinate Mg(2+). IMP is bound by residues D13–K16, N38–H41, T129, R143, Q223, T238, and R302. The active-site Proton donor is H41. T298–R304 is a binding site for substrate. GTP is bound by residues R304, K330–D332, and S412–S414.

Belongs to the adenylosuccinate synthetase family. Homodimer. Mg(2+) serves as cofactor.

It is found in the cytoplasm. It carries out the reaction IMP + L-aspartate + GTP = N(6)-(1,2-dicarboxyethyl)-AMP + GDP + phosphate + 2 H(+). It participates in purine metabolism; AMP biosynthesis via de novo pathway; AMP from IMP: step 1/2. Functionally, plays an important role in the de novo pathway of purine nucleotide biosynthesis. Catalyzes the first committed step in the biosynthesis of AMP from IMP. This is Adenylosuccinate synthetase from Rhizorhabdus wittichii (strain DSM 6014 / CCUG 31198 / JCM 15750 / NBRC 105917 / EY 4224 / RW1) (Sphingomonas wittichii).